The sequence spans 244 residues: 1-(5-phosphoribosyl)-5-[(5-phosphoribosylamino)methylideneamino] imidazole-4-carboxamide isomerase (244 aa).

Aspartate 10 serves as the catalytic Proton acceptor. Catalysis depends on aspartate 129, which acts as the Proton donor.

The protein belongs to the HisA/HisF family.

The protein localises to the cytoplasm. It carries out the reaction 1-(5-phospho-beta-D-ribosyl)-5-[(5-phospho-beta-D-ribosylamino)methylideneamino]imidazole-4-carboxamide = 5-[(5-phospho-1-deoxy-D-ribulos-1-ylimino)methylamino]-1-(5-phospho-beta-D-ribosyl)imidazole-4-carboxamide. The protein operates within amino-acid biosynthesis; L-histidine biosynthesis; L-histidine from 5-phospho-alpha-D-ribose 1-diphosphate: step 4/9. This Rhodococcus jostii (strain RHA1) protein is 1-(5-phosphoribosyl)-5-[(5-phosphoribosylamino)methylideneamino] imidazole-4-carboxamide isomerase.